Consider the following 159-residue polypeptide: Lipoprotein signal peptidase (159 aa).

A run of 3 helical transmembrane segments spans residues 4–24, 64–84, and 88–108; these read PYFV…DQVT, MSFF…FYIK, and GNFL…GNFI. Residues D118 and D136 contribute to the active site. Residues 131 to 151 form a helical membrane-spanning segment; sequence IFNGADSSLTIGVILVLIALL.

This sequence belongs to the peptidase A8 family.

The protein resides in the cell membrane. The enzyme catalyses Release of signal peptides from bacterial membrane prolipoproteins. Hydrolyzes -Xaa-Yaa-Zaa-|-(S,diacylglyceryl)Cys-, in which Xaa is hydrophobic (preferably Leu), and Yaa (Ala or Ser) and Zaa (Gly or Ala) have small, neutral side chains.. Its pathway is protein modification; lipoprotein biosynthesis (signal peptide cleavage). In terms of biological role, this protein specifically catalyzes the removal of signal peptides from prolipoproteins. This Staphylococcus carnosus (strain TM300) protein is Lipoprotein signal peptidase.